The following is a 420-amino-acid chain: Synaptosomal-associated protein 47 (420 aa).

2 t-SNARE coiled-coil homology domains span residues 110–172 (AEAA…LTEL) and 357–419 (TSEP…MKKL). The interval 338-357 (ATHCEPSSGSQEGRPLQLQT) is disordered. A compositionally biased stretch (polar residues) spans 342-357 (EPSSGSQEGRPLQLQT).

The protein belongs to the SVAP1 family. Forms a complex containing SNAP47, VAMP2 and STX1A. Associates with the BLOC-1 complex. Interacts with BLOC1S6.

The protein localises to the endomembrane system. Its subcellular location is the cytoplasm. It is found in the perinuclear region. In terms of biological role, may play a role in intracellular membrane fusion. The protein is Synaptosomal-associated protein 47 (SNAP47) of Bos taurus (Bovine).